The sequence spans 504 residues: D-alanine--D-alanyl carrier protein ligase (504 aa).

152-153 serves as a coordination point for ATP; the sequence is TS. Residue D197 participates in D-alanine binding. 292–297 contacts ATP; the sequence is NTYGPT. Residue V301 coordinates D-alanine. ATP is bound by residues D383, 394–397, and K492; that span reads YNGR. K492 lines the D-alanine pocket.

Belongs to the ATP-dependent AMP-binding enzyme family. DltA subfamily.

It is found in the cytoplasm. The enzyme catalyses holo-[D-alanyl-carrier protein] + D-alanine + ATP = D-alanyl-[D-alanyl-carrier protein] + AMP + diphosphate. Its pathway is cell wall biogenesis; lipoteichoic acid biosynthesis. Functionally, catalyzes the first step in the D-alanylation of lipoteichoic acid (LTA), the activation of D-alanine and its transfer onto the D-alanyl carrier protein (Dcp) DltC. In an ATP-dependent two-step reaction, forms a high energy D-alanyl-AMP intermediate, followed by transfer of the D-alanyl residue as a thiol ester to the phosphopantheinyl prosthetic group of the Dcp. D-alanylation of LTA plays an important role in modulating the properties of the cell wall in Gram-positive bacteria, influencing the net charge of the cell wall. The chain is D-alanine--D-alanyl carrier protein ligase from Bacillus cereus (strain Q1).